The following is a 58-amino-acid chain: Pepsin-1 (58 aa).

A propeptide spans 1–41 (LLQVPLEKGQSAREYLQEQGLWEQYRLKYPYNPMAKFDPSF) (activation peptide).

The protein belongs to the peptidase A1 family.

This Thunnus orientalis (North Pacific bluefin tuna) protein is Pepsin-1.